The primary structure comprises 224 residues: Putative cobalt transport protein CbiM (224 aa).

Helical transmembrane passes span 8-28, 41-61, 75-95, 108-128, 138-158, and 169-189; these read LPPLWCLIYYIICIPFIVYGI, AMPMLALSGAFMFILSSLKMP, FGAVFFGPAVVGVLSVIVLVF, LGANVLSMGIIGPLCGYAVWL, EIAMFFTAFVADLMTYVVTAI, and FFTALVTFLGIFAVTQIPLAI.

This sequence belongs to the CbiM family. In terms of assembly, forms an energy-coupling factor (ECF) transporter complex composed of an ATP-binding protein (A component, CbiO), a transmembrane protein (T component, CbiQ) and 2 possible substrate-capture proteins (S components, CbiM and CbiN) of unknown stoichimetry.

It localises to the cell membrane. It functions in the pathway cofactor biosynthesis; adenosylcobalamin biosynthesis. Functionally, part of the energy-coupling factor (ECF) transporter complex CbiMNOQ involved in cobalt import. In Methanosphaera stadtmanae (strain ATCC 43021 / DSM 3091 / JCM 11832 / MCB-3), this protein is Putative cobalt transport protein CbiM.